The following is a 1322-amino-acid chain: Mediator of RNA polymerase II transcription subunit 12 (1322 aa).

The interval Met1–Asn21 is disordered.

The protein belongs to the Mediator complex subunit 12 family. Component of the SRB8-11 complex, which itself associates with the Mediator complex.

It is found in the nucleus. Functionally, component of the SRB8-11 complex. The SRB8-11 complex is a regulatory module of the Mediator complex which is itself involved in regulation of basal and activated RNA polymerase II-dependent transcription. The SRB8-11 complex may be involved in the transcriptional repression of a subset of genes regulated by Mediator. It may inhibit the association of the Mediator complex with RNA polymerase II to form the holoenzyme complex. In Kluyveromyces lactis (strain ATCC 8585 / CBS 2359 / DSM 70799 / NBRC 1267 / NRRL Y-1140 / WM37) (Yeast), this protein is Mediator of RNA polymerase II transcription subunit 12 (SRB8).